The primary structure comprises 142 residues: Truncated non-functional hemagglutinin-esterase homolog (142 aa).

Over 1–117 (MNFTVPVQAI…ESVDVISSSY (117 aa)) the chain is Virion surface. A glycan (N-linked (GlcNAc...) asparagine; by host) is linked at Asn-2. A disulfide bridge links Cys-28 with Cys-33. N-linked (GlcNAc...) asparagine; by host glycosylation is found at Asn-46 and Asn-67. Residues Cys-70 and Cys-95 are joined by a disulfide bond. A helical transmembrane segment spans residues 118-138 (FVATWVLLVVVIILVFIIISF). Residues 139–142 (CISN) lie on the Intravirion side of the membrane.

It belongs to the influenza type C/coronaviruses hemagglutinin-esterase family. In terms of assembly, homodimer. N-glycosylated.

It localises to the virion membrane. It is found in the host cell membrane. The polypeptide is Truncated non-functional hemagglutinin-esterase homolog (HE) (Berne virus (BEV)).